We begin with the raw amino-acid sequence, 661 residues long: UvrABC system protein B (661 aa).

In terms of domain architecture, Helicase ATP-binding spans 25 to 182; that stretch reads AGLNSKKRSQ…SDLVNLQYER (158 aa). ATP is bound at residue 38–45; the sequence is GITGSGKT. A Beta-hairpin motif is present at residues 91 to 114; the sequence is YYDYYQPEAYIARTDTFIEKDSSI. Positions 430-592 constitute a Helicase C-terminal domain; the sequence is QVEDLISEIQ…IIPQTINRTI (163 aa). The UVR domain occupies 621–656; it reads KAHIYKLKKAMLKAASNLEFEQATKLRDQLKNLEEA.

It belongs to the UvrB family. In terms of assembly, forms a heterotetramer with UvrA during the search for lesions. Interacts with UvrC in an incision complex.

The protein resides in the cytoplasm. Its function is as follows. The UvrABC repair system catalyzes the recognition and processing of DNA lesions. A damage recognition complex composed of 2 UvrA and 2 UvrB subunits scans DNA for abnormalities. Upon binding of the UvrA(2)B(2) complex to a putative damaged site, the DNA wraps around one UvrB monomer. DNA wrap is dependent on ATP binding by UvrB and probably causes local melting of the DNA helix, facilitating insertion of UvrB beta-hairpin between the DNA strands. Then UvrB probes one DNA strand for the presence of a lesion. If a lesion is found the UvrA subunits dissociate and the UvrB-DNA preincision complex is formed. This complex is subsequently bound by UvrC and the second UvrB is released. If no lesion is found, the DNA wraps around the other UvrB subunit that will check the other stand for damage. The chain is UvrABC system protein B from Rickettsia canadensis (strain McKiel).